The chain runs to 373 residues: Type 2 DNA topoisomerase 6 subunit A (373 aa).

Positions 15-153 (QGDTLAKERL…FHMRPEEDGA (139 aa)) constitute a Topo IIA-type catalytic domain. Catalysis depends on Tyr110, which acts as the O-(5'-phospho-DNA)-tyrosine intermediate. Positions 206 and 258 each coordinate Mg(2+).

This sequence belongs to the TOP6A family. Homodimer. Heterotetramer of two Top6A and two Top6B chains. It depends on Mg(2+) as a cofactor.

The catalysed reaction is ATP-dependent breakage, passage and rejoining of double-stranded DNA.. In terms of biological role, relaxes both positive and negative superturns and exhibits a strong decatenase activity. In Methanosarcina acetivorans (strain ATCC 35395 / DSM 2834 / JCM 12185 / C2A), this protein is Type 2 DNA topoisomerase 6 subunit A.